Here is an 89-residue protein sequence, read N- to C-terminus: Small ribosomal subunit protein uS15 (89 aa).

The protein belongs to the universal ribosomal protein uS15 family. In terms of assembly, part of the 30S ribosomal subunit. Forms a bridge to the 50S subunit in the 70S ribosome, contacting the 23S rRNA.

Its function is as follows. One of the primary rRNA binding proteins, it binds directly to 16S rRNA where it helps nucleate assembly of the platform of the 30S subunit by binding and bridging several RNA helices of the 16S rRNA. Forms an intersubunit bridge (bridge B4) with the 23S rRNA of the 50S subunit in the ribosome. The chain is Small ribosomal subunit protein uS15 from Exiguobacterium sibiricum (strain DSM 17290 / CCUG 55495 / CIP 109462 / JCM 13490 / 255-15).